Here is a 568-residue protein sequence, read N- to C-terminus: Hexose transporter 1 (568 aa).

At 1–32 (MATEEMREKSLKREAESLWDIPPESYASKACS) the chain is on the cytoplasmic side. Residues 33–53 (CMGTAAQLVMVAVLGSFQFGF) form a helical membrane-spanning segment. Over 54-86 (NLSALNTSKAFIILDFGWCKDENGGHYSDCDTG) the chain is Extracellular. Cys72 and Cys83 are oxidised to a cystine. Residues 87 to 107 (LVYGSLINTAVFLGACVGCLL) traverse the membrane as a helical segment. The Cytoplasmic portion of the chain corresponds to 108-119 (GGRLTDFGRRAS). A helical membrane pass occupies residues 120-140 (LIFTHCVCTLGCILSAAAEGF). The Extracellular portion of the chain corresponds to 141–142 (PT). A helical membrane pass occupies residues 143–163 (LLIARLVVGVAVGMFTVCVPM). The Cytoplasmic segment spans residues 164-182 (YLSEVTPDDRRGYFGTFHQ). Gln182 lines the alpha-D-glucose pocket. Gln182 contacts beta-D-glucose. The helical transmembrane segment at 183–203 (LFITLGIFFGTLLGLAFGNAP) threads the bilayer. The Extracellular portion of the chain corresponds to 204–220 (AGDEVYEVSTFQQAWWR). A helical membrane pass occupies residues 221–241 (VMLGLPAVVSLLAIWLLWFVF). Residues 242–306 (PFETPQYMVE…KAIVHPTYRS (65 aa)) lie on the Cytoplasmic side of the membrane. Residues 307–327 (VILLACLLSIMQQFTGINVLV) form a helical membrane-spanning segment. Gln318, Gln319, and Asn324 together coordinate alpha-D-glucose. Position 318 (Gln318) interacts with beta-D-glucose. Residue Asn324 participates in beta-D-glucose binding. Topologically, residues 328–345 (ANSNNLYSSLKLPQDAVT) are extracellular. Residues 346–366 (GLTVGFTALNVFLTVITIPLV) form a helical membrane-spanning segment. Asn355 contacts beta-D-glucose. Topologically, residues 367 to 374 (DRLGRRTL) are cytoplasmic. Residues 375 to 395 (LLFSEAVMFVAMGIAFVANLV) traverse the membrane as a helical segment. The Extracellular segment spans residues 396-406 (DQSNTAVQWVT). A helical transmembrane segment spans residues 407 to 427 (VACVYVFIVGFAVGYGPVLWI). Residue Trp426 participates in alpha-D-glucose binding. At 428–443 (YIHEIFPPEIKQGAAS) the chain is on the cytoplasmic side. The chain crosses the membrane as a helical span at residues 444–464 (LASALNWVATVAIVLPSDFLL). Residues 465-469 (KQGFS) are Extracellular-facing. Residues 470-490 (VFVGICTVALAIIFVVTFIFV) traverse the membrane as a helical segment. The Cytoplasmic segment spans residues 491 to 568 (KETKGLSIEE…DDLTKGTEVV (78 aa)).

This sequence belongs to the major facilitator superfamily. Sugar transporter (TC 2.A.1.1) family. As to quaternary structure, homodimer.

The protein localises to the cell membrane. It carries out the reaction D-glucose(out) = D-glucose(in). It catalyses the reaction D-fructose(out) = D-fructose(in). The catalysed reaction is D-galactose(in) = D-galactose(out). The enzyme catalyses D-mannose(out) = D-mannose(in). It carries out the reaction D-glucosamine(out) = D-glucosamine(in). It catalyses the reaction D-xylose(out) = D-xylose(in). With respect to regulation, inhibited by cytochalasin B. Its function is as follows. Sodium-independent facilitative hexose transporter. Can transport D-glucose and D-mannose with high affinity, and D-fructose and D-galactose with low affinity. Can transport D-xylose and D-glucosamine. The sequence is that of Hexose transporter 1 from Toxoplasma gondii.